The primary structure comprises 544 residues: Putative pentatricopeptide repeat-containing protein At5g59200, chloroplastic (544 aa).

Positions Met-1–Ser-21 are disordered. A chloroplast-targeting transit peptide spans Met-1 to Arg-25. PPR repeat units lie at residues Asp-60–Pro-90, Asn-91–Pro-125, Asn-127–Ser-156, Ser-157–Arg-187, Asp-188–Lys-218, Asp-219–Ala-253, Asn-254–Leu-288, Ser-289–Lys-319, Asp-320–Pro-354, Asn-355–Val-385, and Gln-391–Glu-421. Residues Met-426–Asp-501 are type E motif. Positions Asn-502–Arg-532 are type E(+) motif.

It belongs to the PPR family. PCMP-E subfamily.

It is found in the plastid. It localises to the chloroplast. Its function is as follows. Involved in RNA editing event in chloroplasts. Required for the editing of a single site in rpl23 transcript. The sequence is that of Putative pentatricopeptide repeat-containing protein At5g59200, chloroplastic (PCMP-E41) from Arabidopsis thaliana (Mouse-ear cress).